Reading from the N-terminus, the 124-residue chain is Small ribosomal subunit protein uS12cy (124 aa).

It belongs to the universal ribosomal protein uS12 family. As to quaternary structure, part of the 30S ribosomal subunit.

It localises to the plastid. The protein resides in the chloroplast. Its function is as follows. With S4 and S5 plays an important role in translational accuracy. Located at the interface of the 30S and 50S subunits. This Olimarabidopsis pumila (Dwarf rocket) protein is Small ribosomal subunit protein uS12cy (rps12-B).